Consider the following 255-residue polypeptide: Probable pyridoxal 5'-phosphate synthase subunit PDX2 (255 aa).

An L-glutamine-binding site is contributed by Gly-46–Ser-48. Cys-78 acts as the Nucleophile in catalysis. Residues Arg-108 and Ile-142–Arg-143 contribute to the L-glutamine site. Catalysis depends on charge relay system residues His-202 and Glu-204. The disordered stretch occupies residues Gly-225–Gln-255.

It belongs to the glutaminase PdxT/SNO family. In terms of assembly, interacts with PDX1.1 or PDX1.3, but not with PDX1.2. Binds to RPA2A. In terms of tissue distribution, strongly expressed in roots, stems, leaves and flowers.

It is found in the cytoplasm. It catalyses the reaction aldehydo-D-ribose 5-phosphate + D-glyceraldehyde 3-phosphate + L-glutamine = pyridoxal 5'-phosphate + L-glutamate + phosphate + 3 H2O + H(+). The enzyme catalyses L-glutamine + H2O = L-glutamate + NH4(+). Its pathway is cofactor biosynthesis; pyridoxal 5'-phosphate biosynthesis. Its function is as follows. Catalyzes the hydrolysis of glutamine to glutamate and ammonia as part of the biosynthesis of pyridoxal 5'-phosphate. The resulting ammonia molecule is channeled to the active site of PDX1. Involved in the indirect resistance to singlet oxygen-generating photosensitizers. The chain is Probable pyridoxal 5'-phosphate synthase subunit PDX2 (PDX2) from Arabidopsis thaliana (Mouse-ear cress).